The sequence spans 331 residues: L-lactate dehydrogenase A chain (331 aa).

NAD(+)-binding positions include 29-57 and Arg-98; that span reads GMVG…MEDK. Positions 105, 137, and 168 each coordinate substrate. Asn-137 lines the NAD(+) pocket. His-192 functions as the Proton acceptor in the catalytic mechanism. Thr-247 is a binding site for substrate.

It belongs to the LDH/MDH superfamily. LDH family. As to quaternary structure, homotetramer.

The protein localises to the cytoplasm. The enzyme catalyses (S)-lactate + NAD(+) = pyruvate + NADH + H(+). Its pathway is fermentation; pyruvate fermentation to lactate; (S)-lactate from pyruvate: step 1/1. In terms of biological role, interconverts simultaneously and stereospecifically pyruvate and lactate with concomitant interconversion of NADH and NAD(+). This Gobionotothen gibberifrons (Humped rockcod) protein is L-lactate dehydrogenase A chain (ldha).